A 180-amino-acid chain; its full sequence is Large ribosomal subunit protein uL5 (180 aa).

Belongs to the universal ribosomal protein uL5 family. In terms of assembly, part of the 50S ribosomal subunit; part of the 5S rRNA/L5/L18/L25 subcomplex. Contacts the 5S rRNA and the P site tRNA. Forms a bridge to the 30S subunit in the 70S ribosome.

In terms of biological role, this is one of the proteins that bind and probably mediate the attachment of the 5S RNA into the large ribosomal subunit, where it forms part of the central protuberance. In the 70S ribosome it contacts protein S13 of the 30S subunit (bridge B1b), connecting the 2 subunits; this bridge is implicated in subunit movement. Contacts the P site tRNA; the 5S rRNA and some of its associated proteins might help stabilize positioning of ribosome-bound tRNAs. In Anaeromyxobacter sp. (strain Fw109-5), this protein is Large ribosomal subunit protein uL5.